A 428-amino-acid chain; its full sequence is MGPPPGAGVSCRGGCGFSRLLAWCFLLALSPQAPGSRGAEAVWTAYLNVSWRVPHTGVNRTVWELSEEGVYGQDSPLEPVAGVLVPPDGPGALNACNPHTNFTVPTVWGSTVQVSWLALIQRGGGCTFADKIHLAYERGASGAVIFNFPGTRNEVIPMSHPGAVDIVAIMIGNLKGTKILQSIQRGIQVTMVIEVGKKHGPWVNHYSIFFVSVSFFIITAATVGYFIFYSARRLRNARAQSRKQRQLKADAKKAIGRLQLRTLKQGDKEIGPDGDSCAVCIELYKPNDLVRILTCNHIFHKTCVDPWLLEHRTCPMCKCDILKALGIEVDVEDGSVSLQVPVSNEISNSASSHEEDNRSETASSGYASVQGTDEPPLEEHVQSTNESLQLVNHEANSVAVDVIPHVDNPTFEEDETPNQETAVREIKS.

An N-terminal signal peptide occupies residues 1–38; that stretch reads MGPPPGAGVSCRGGCGFSRLLAWCFLLALSPQAPGSRG. Residues Asn48, Asn59, and Asn101 are each glycosylated (N-linked (GlcNAc...) asparagine). The region spanning 75 to 183 is the PA domain; sequence SPLEPVAGVL…LKGTKILQSI (109 aa). The chain crosses the membrane as a helical span at residues 208–228; sequence IFFVSVSFFIITAATVGYFIF. The RING-type; atypical zinc finger occupies 277–318; sequence CAVCIELYKPNDLVRILTCNHIFHKTCVDPWLLEHRTCPMCK. Residues 346–428 are disordered; the sequence is ISNSASSHEE…QETAVREIKS (83 aa). Residues 360–371 show a composition bias toward polar residues; it reads ETASSGYASVQG.

Auto-ubiquitinated. Controls the development of T-cell clonal anergy by ubiquitination.

It localises to the cytoplasm. It is found in the endomembrane system. The protein localises to the cytoskeleton. The protein resides in the perinuclear region. The catalysed reaction is S-ubiquitinyl-[E2 ubiquitin-conjugating enzyme]-L-cysteine + [acceptor protein]-L-lysine = [E2 ubiquitin-conjugating enzyme]-L-cysteine + N(6)-ubiquitinyl-[acceptor protein]-L-lysine.. It participates in protein modification; protein ubiquitination. Functionally, E3 ubiquitin-protein ligase that catalyzes 'Lys-27', 'Lys-48'- or 'Lys-63'-linked polyubiquitin chains formation and plays a role in different biological processes such as modulation of immune response, cytoskeletal dynamics or protein homeostasis. Inhibits IL2 and IL4 transcription, thereby playing an important role in the induction of the anergic phenotype, a long-term stable state of T-lymphocyte unresponsiveness to antigenic stimulation associated with the blockade of interleukin production. Ubiquitinates ARPC5 with 'Lys-48' linkages and COR1A with 'Lys-63' linkages leading to their degradation, down-regulation of these cytoskeletal components results in impaired lamellipodium formation and reduced accumulation of F-actin at the immunological synapse. Functions in the patterning of the dorsal ectoderm; sensitizes ectoderm to respond to neural-inducing signals. Plays a positive role in innate immune response by promoting 'Lys-63'-linked ubiquitination of TBK1 after RNA- or DNA-virus infection. Regulates alveolar macrophage activation and neutrophil infiltration by interacting with TLR4, targeting it for degradation, and inhibiting NF-kappa-B activation, hence decreasing pro-inflammatory cytokines. Negatively regulates the IL-3/STAT5 signaling pathway by facilitating 'Lys-27'-linked polyubiquitination of IL3RA leading to its degradation via lysosomal pathway. Directly regulates the N-glycosylation process in the endoplasmic reticulum by targeting the glycosyl-transferase RPN1 for ubiquitination and degradation. Other substrates targeted for degradation by RNF128 include transmembrane proteins CD40L, CD83 or the tetraspanin CD151. In Homo sapiens (Human), this protein is E3 ubiquitin-protein ligase RNF128 (RNF128).